The sequence spans 692 residues: Methionine--tRNA ligase (692 aa).

A 'HIGH' region motif is present at residues 12 to 22 (PYANGSFHIGH). Positions 143, 146, 156, and 159 each coordinate Zn(2+). A 'KMSKS' region motif is present at residues 341–345 (KMSKS). Lys-344 serves as a coordination point for ATP. Positions 586–692 (DFAKIDLRIA…PGAQPGMRVR (107 aa)) constitute a tRNA-binding domain.

The protein belongs to the class-I aminoacyl-tRNA synthetase family. MetG type 1 subfamily. In terms of assembly, homodimer. It depends on Zn(2+) as a cofactor.

It is found in the cytoplasm. The enzyme catalyses tRNA(Met) + L-methionine + ATP = L-methionyl-tRNA(Met) + AMP + diphosphate. Its function is as follows. Is required not only for elongation of protein synthesis but also for the initiation of all mRNA translation through initiator tRNA(fMet) aminoacylation. This chain is Methionine--tRNA ligase, found in Bordetella parapertussis (strain 12822 / ATCC BAA-587 / NCTC 13253).